The primary structure comprises 145 residues: Large ribosomal subunit protein uL16 (145 aa).

It belongs to the universal ribosomal protein uL16 family. Part of the 50S ribosomal subunit.

Its function is as follows. Binds 23S rRNA and is also seen to make contacts with the A and possibly P site tRNAs. The polypeptide is Large ribosomal subunit protein uL16 (Lactobacillus gasseri (strain ATCC 33323 / DSM 20243 / BCRC 14619 / CIP 102991 / JCM 1131 / KCTC 3163 / NCIMB 11718 / NCTC 13722 / AM63)).